We begin with the raw amino-acid sequence, 457 residues long: MALWGGRFTQATDKRFKDFNDSLRFDYRLAEQDIEGSIGWSKALVTVNVLTQQEQQVLENALSELLIEVRSNPQKILQDDAEDIHSWVESKLIDKVGNLGKKLHTGRSRNDQVALDIKMWCKQRVTELQHSMRELQRKLVETAEHNQHVVMPGYTHLQRAQPITFAHWCMAYVEMLDRDYGRLQDAYQRMNTCPLGSGALAGTAYAIDRDLLAQDLDFAMATRNSLDSVSDRDHIIELLSTASLSMAHLSRFAEDMIIFNSGEADFVELSDRVTSGSSLMPQKKNPDACELIRGKVGRVVGALTGMLMTVKGLPLAYNKDMQEDKEGIFDALDTWQDCVDMATFVLEDIKVSVERTKEAALKGYSNSTELADYLVAKGVPFRDSHHIVGETVVYAIKVHKGLEDLSIEEFHQFSNAIEEDVYEILSLQSCLDKRCAKGGVSPLRVAEAIAEAKKRFK.

Belongs to the lyase 1 family. Argininosuccinate lyase subfamily.

It is found in the cytoplasm. The enzyme catalyses 2-(N(omega)-L-arginino)succinate = fumarate + L-arginine. The protein operates within amino-acid biosynthesis; L-arginine biosynthesis; L-arginine from L-ornithine and carbamoyl phosphate: step 3/3. This is Argininosuccinate lyase from Histophilus somni (strain 129Pt) (Haemophilus somnus).